Reading from the N-terminus, the 494-residue chain is ATP synthase subunit beta, chloroplastic (494 aa).

Residue 172–179 coordinates ATP; that stretch reads GGAGVGKT.

The protein belongs to the ATPase alpha/beta chains family. F-type ATPases have 2 components, CF(1) - the catalytic core - and CF(0) - the membrane proton channel. CF(1) has five subunits: alpha(3), beta(3), gamma(1), delta(1), epsilon(1). CF(0) has four main subunits: a(1), b(1), b'(1) and c(9-12).

The protein localises to the plastid. The protein resides in the chloroplast thylakoid membrane. It catalyses the reaction ATP + H2O + 4 H(+)(in) = ADP + phosphate + 5 H(+)(out). In terms of biological role, produces ATP from ADP in the presence of a proton gradient across the membrane. The catalytic sites are hosted primarily by the beta subunits. The sequence is that of ATP synthase subunit beta, chloroplastic from Physcomitrium patens (Spreading-leaved earth moss).